The primary structure comprises 369 residues: Tsukushi (369 aa).

Residues Met-1–Thr-19 form the signal peptide. The region spanning Lys-20–Leu-60 is the LRRNT domain. 11 LRR repeats span residues Asp-61–Thr-81, Thr-87–Arg-108, Tyr-111–Ser-132, Pro-134–Ser-155, Pro-161–Ser-181, Asn-184–Pro-205, Leu-206–Gly-226, Gly-229–Ser-248, Ala-254–Gly-276, Ser-279–Tyr-300, and Ser-303–Gln-323. An N-linked (GlcNAc...) asparagine glycan is attached at Asn-76. A glycan (N-linked (GlcNAc...) asparagine) is linked at Asn-189. Asn-284 is a glycosylation site (N-linked (GlcNAc...) asparagine).

In terms of assembly, forms a ternary complex with chordin/CHRD and BMP4. Interacts with FZD4 (via FZ domain); competes with WNT2B for binding to FZD4, inhibiting Wnt signaling and repressing peripheral eye development. Interacts with BMP4; shows stronger interaction with BMP4 than isoform 2. Interacts with DVR1/VG1; the interaction is inhibited by BMP4. Interacts with BMP7. As to quaternary structure, interacts with FZD4 (via FZ domain); competes with WNT2B for binding to FZD4, inhibiting Wnt signaling and repressing peripheral eye development. Interacts with BMP4; shows weaker interaction with BMP4 than isoform 1. Interacts with DVR1/VG1; the interaction is inhibited by BMP4. Interacts with BMP7. N-glycosylated. In terms of tissue distribution, during embryonic development, expressed in the middle primitive streak and Hensen's node. Expressed in the peripheral region of the developing eye. Expressed in the presomitic mesoderm during somitogenesis in a NOTCH-dependent manner.

It localises to the secreted. Functionally, contributes to various developmental events through its interactions with multiple signaling pathways. Dorsalizing factor involved in the induction of Hensen's node by inhibiting bone morphogenetic proteins during gastrulation and by enhancing DVR1/VG1 activity. Wnt signaling inhibitor which competes with WNT2B for binding to Wnt receptor FZD4 and represses WNT2B-dependent development of the peripheral eye. Shows strong bone morphogenetic protein antagonistic activity. Its function is as follows. Shows weak bone morphogenetic protein antagonistic activity. The protein is Tsukushi (TSKU) of Gallus gallus (Chicken).